The sequence spans 90 residues: MSRTIFCTFLKKDAERQDFQLYPGEIGKRIYNEISKEAWSQWITKQTMLINEKKLSMMNIEDRKLLEQEMVNFLFEGQDVHIAGYTPPSK.

It belongs to the Fe(2+)-trafficking protein family. In terms of assembly, monomer.

Its function is as follows. Could be a mediator in iron transactions between iron acquisition and iron-requiring processes, such as synthesis and/or repair of Fe-S clusters in biosynthetic enzymes. This Yersinia pestis bv. Antiqua (strain Antiqua) protein is Probable Fe(2+)-trafficking protein.